The chain runs to 146 residues: 3-dehydroquinate dehydratase (146 aa).

Tyr24 serves as the catalytic Proton acceptor. The substrate site is built by Asn73, His79, and Asp86. His99 functions as the Proton donor in the catalytic mechanism. Substrate-binding positions include 100–101 and Arg110; that span reads LS.

The protein belongs to the type-II 3-dehydroquinase family. As to quaternary structure, homododecamer.

The enzyme catalyses 3-dehydroquinate = 3-dehydroshikimate + H2O. It participates in metabolic intermediate biosynthesis; chorismate biosynthesis; chorismate from D-erythrose 4-phosphate and phosphoenolpyruvate: step 3/7. In terms of biological role, catalyzes a trans-dehydration via an enolate intermediate. The polypeptide is 3-dehydroquinate dehydratase (Shewanella baltica (strain OS185)).